Here is a 644-residue protein sequence, read N- to C-terminus: Acetyl-coenzyme A synthetase (644 aa).

Residues 190 to 193 (RGSK) and Thr308 each bind CoA. Residues 384–386 (GEP), 408–413 (DTWWQT), Asp497, and Arg512 each bind ATP. A CoA-binding site is contributed by Ser520. Arg523 serves as a coordination point for ATP. Mg(2+) is bound by residues Val534, His536, and Val539. Residue Arg581 coordinates CoA. Lys606 is subject to N6-acetyllysine.

It belongs to the ATP-dependent AMP-binding enzyme family. It depends on Mg(2+) as a cofactor. Acetylated. Deacetylation by the SIR2-homolog deacetylase activates the enzyme.

The enzyme catalyses acetate + ATP + CoA = acetyl-CoA + AMP + diphosphate. In terms of biological role, catalyzes the conversion of acetate into acetyl-CoA (AcCoA), an essential intermediate at the junction of anabolic and catabolic pathways. AcsA undergoes a two-step reaction. In the first half reaction, AcsA combines acetate with ATP to form acetyl-adenylate (AcAMP) intermediate. In the second half reaction, it can then transfer the acetyl group from AcAMP to the sulfhydryl group of CoA, forming the product AcCoA. The sequence is that of Acetyl-coenzyme A synthetase from Magnetococcus marinus (strain ATCC BAA-1437 / JCM 17883 / MC-1).